A 570-amino-acid polypeptide reads, in one-letter code: Proline--tRNA ligase (570 aa).

The protein belongs to the class-II aminoacyl-tRNA synthetase family. ProS type 1 subfamily. Homodimer.

The protein localises to the cytoplasm. The enzyme catalyses tRNA(Pro) + L-proline + ATP = L-prolyl-tRNA(Pro) + AMP + diphosphate. Catalyzes the attachment of proline to tRNA(Pro) in a two-step reaction: proline is first activated by ATP to form Pro-AMP and then transferred to the acceptor end of tRNA(Pro). As ProRS can inadvertently accommodate and process non-cognate amino acids such as alanine and cysteine, to avoid such errors it has two additional distinct editing activities against alanine. One activity is designated as 'pretransfer' editing and involves the tRNA(Pro)-independent hydrolysis of activated Ala-AMP. The other activity is designated 'posttransfer' editing and involves deacylation of mischarged Ala-tRNA(Pro). The misacylated Cys-tRNA(Pro) is not edited by ProRS. The polypeptide is Proline--tRNA ligase (Wolinella succinogenes (strain ATCC 29543 / DSM 1740 / CCUG 13145 / JCM 31913 / LMG 7466 / NCTC 11488 / FDC 602W) (Vibrio succinogenes)).